Here is a 218-residue protein sequence, read N- to C-terminus: Thiopurine S-methyltransferase (218 aa).

Positions 10, 45, 66, and 123 each coordinate S-adenosyl-L-methionine.

It belongs to the class I-like SAM-binding methyltransferase superfamily. TPMT family.

It is found in the cytoplasm. It catalyses the reaction S-adenosyl-L-methionine + a thiopurine = S-adenosyl-L-homocysteine + a thiopurine S-methylether.. This Azotobacter vinelandii (strain DJ / ATCC BAA-1303) protein is Thiopurine S-methyltransferase.